Reading from the N-terminus, the 317-residue chain is Coproporphyrinogen-III oxidase, aerobic 1 (317 aa).

Positions 38-47 are important for dimerization; sequence VLRDGAIFEQ. Residue Ser-82 participates in substrate binding. The active-site Proton donor is the His-96. Residues 98–100 and 269–274 each bind substrate; these read NYR and NGRTES. Residues 251–286 form an important for dimerization region; that stretch reads YVEFNLVYDRGTIFGLQTNGRTESILMSLPPLVRWE.

This sequence belongs to the aerobic coproporphyrinogen-III oxidase family. Homodimer.

It localises to the cytoplasm. It carries out the reaction coproporphyrinogen III + O2 + 2 H(+) = protoporphyrinogen IX + 2 CO2 + 2 H2O. It functions in the pathway porphyrin-containing compound metabolism; protoporphyrin-IX biosynthesis; protoporphyrinogen-IX from coproporphyrinogen-III (O2 route): step 1/1. Key enzyme in heme biosynthesis. Catalyzes the oxidative decarboxylation of propionic acid side chains of rings A and B of coproporphyrinogen III. This chain is Coproporphyrinogen-III oxidase, aerobic 1, found in Nostoc sp. (strain PCC 7120 / SAG 25.82 / UTEX 2576).